The sequence spans 65 residues: MPKIKTNRGAAKRFKRTGSGGFKCVQSHRRHILTKKSTKRKRQLRSPDMVHPSDVRAVARMLPYT.

Residues M1–P52 form a disordered region. Residues Q26 to L44 are compositionally biased toward basic residues.

This sequence belongs to the bacterial ribosomal protein bL35 family.

This chain is Large ribosomal subunit protein bL35, found in Methylococcus capsulatus (strain ATCC 33009 / NCIMB 11132 / Bath).